We begin with the raw amino-acid sequence, 339 residues long: UDP-glucose 4-epimerase (339 aa).

NAD(+)-binding positions include 10 to 12 (GYI), 31 to 35 (DNLSN), 58 to 59 (DL), Phe-80, and Lys-84. 124-126 (SAT) provides a ligand contact to substrate. The active-site Proton acceptor is the Tyr-148. Residues Lys-152 and Tyr-176 each contribute to the NAD(+) site. Substrate is bound by residues 176 to 178 (YFN), 197 to 199 (NNL), Arg-230, and 291 to 294 (RPGD).

The protein belongs to the NAD(P)-dependent epimerase/dehydratase family. Requires NAD(+) as cofactor.

The catalysed reaction is UDP-alpha-D-glucose = UDP-alpha-D-galactose. The enzyme catalyses UDP-N-acetyl-alpha-D-glucosamine = UDP-N-acetyl-alpha-D-galactosamine. It functions in the pathway cell wall biogenesis; teichoic acid biosynthesis. In terms of biological role, catalyzes two distinct but analogous reactions: the reversible epimerization of UDP-glucose to UDP-galactose and the reversible epimerization of UDP-N-acetylglucosamine to UDP-N-acetylgalactosamine. The enzyme is more efficient in catalyzing the interconversion between unacetylated than between corresponding N-acetylated substrates. Essential for growth in media containing either glucose or galactose. May protect the cell from the toxic effects of galactose and glucose or derivatives of both sugars. Involved in the biosynthesis of teichoic acids via the formation of UDP-N-acetylgalactosamine. Influences cell division. In Bacillus subtilis (strain 168), this protein is UDP-glucose 4-epimerase.